The chain runs to 307 residues: OTU domain-containing protein 2 (307 aa).

Disordered stretches follow at residues 23 to 46 (ENKD…RKEV) and 96 to 130 (SRDE…AKRD). A compositionally biased stretch (low complexity) spans 103–114 (QNVPVQQQQQGQ). Residues 167-307 (LKQFDIQPDG…GEHYNSLHDS (141 aa)) enclose the OTU domain.

The chain is OTU domain-containing protein 2 (OTU2) from Saccharomyces cerevisiae (strain ATCC 204508 / S288c) (Baker's yeast).